A 730-amino-acid polypeptide reads, in one-letter code: Elongation factor 2 (730 aa).

A tr-type G domain is found at 19 to 229 (LMIRNIGIVA…GVSFSEVFNY (211 aa)). Residues 28-35 (AHIDHGKT), 94-98 (DTPGH), and 148-151 (NKVD) each bind GTP. The residue at position 596 (histidine 596) is a Diphthamide.

This sequence belongs to the TRAFAC class translation factor GTPase superfamily. Classic translation factor GTPase family. EF-G/EF-2 subfamily.

It localises to the cytoplasm. In terms of biological role, catalyzes the GTP-dependent ribosomal translocation step during translation elongation. During this step, the ribosome changes from the pre-translocational (PRE) to the post-translocational (POST) state as the newly formed A-site-bound peptidyl-tRNA and P-site-bound deacylated tRNA move to the P and E sites, respectively. Catalyzes the coordinated movement of the two tRNA molecules, the mRNA and conformational changes in the ribosome. This is Elongation factor 2 (fusA) from Methanococcoides burtonii (strain DSM 6242 / NBRC 107633 / OCM 468 / ACE-M).